We begin with the raw amino-acid sequence, 192 residues long: Large ribosomal subunit protein uL10 (192 aa).

It belongs to the universal ribosomal protein uL10 family. As to quaternary structure, part of the ribosomal stalk of the 50S ribosomal subunit. The N-terminus interacts with L11 and the large rRNA to form the base of the stalk. The C-terminus forms an elongated spine to which L12 dimers bind in a sequential fashion forming a multimeric L10(L12)X complex.

Forms part of the ribosomal stalk, playing a central role in the interaction of the ribosome with GTP-bound translation factors. The sequence is that of Large ribosomal subunit protein uL10 from Gloeobacter violaceus (strain ATCC 29082 / PCC 7421).